An 882-amino-acid chain; its full sequence is Dual specificity tyrosine-phosphorylation-regulated kinase mbk-1 (882 aa).

Polar residues predominate over residues 1–42 (MNTADVPDNLQSWGQQPSSSYSNTQQHSQMTNLPPINHNNLC). 4 disordered regions span residues 1-45 (MNTA…CDTE), 62-81 (QKQQ…AQRF), 212-239 (KQVR…ASLT), and 255-308 (NHYQ…NGYD). Low complexity predominate over residues 64-79 (QQKQQEQQHIQQQNAQ). The segment covering 220–231 (KSQDAGKPKGSK) has biased composition (basic and acidic residues). The segment covering 290-308 (QQQQRQKSSRGGPYNNGYD) has biased composition (low complexity). In terms of domain architecture, Protein kinase spans 328 to 649 (ILSDTPVGKG…PYYVVRHPFL (322 aa)). ATP-binding positions include 334 to 342 (VGKGSFGQV) and Lys357. Asp456 acts as the Proton acceptor in catalysis. 2 disordered regions span residues 742-761 (HNPN…QYQQ) and 789-882 (QQQQ…NNKL). Low complexity-rich tracts occupy residues 747–761 (QYSQ…QYQQ) and 789–810 (QQQQ…QHLQ). The segment covering 816–827 (RQQDQNEWRNQF) has biased composition (basic and acidic residues). The span at 843 to 869 (SVSNQISRNQFNPQQVSMTHGNVNANN) shows a compositional bias: polar residues.

It belongs to the protein kinase superfamily. CMGC Ser/Thr protein kinase family. MNB/DYRK subfamily. It depends on Mg(2+) as a cofactor. As to expression, expressed in all somatic cells.

It localises to the nucleus. It carries out the reaction L-seryl-[protein] + ATP = O-phospho-L-seryl-[protein] + ADP + H(+). The catalysed reaction is L-threonyl-[protein] + ATP = O-phospho-L-threonyl-[protein] + ADP + H(+). It catalyses the reaction L-tyrosyl-[protein] + ATP = O-phospho-L-tyrosyl-[protein] + ADP + H(+). Functionally, possible role in the function of olfactory neurons. This Caenorhabditis elegans protein is Dual specificity tyrosine-phosphorylation-regulated kinase mbk-1.